We begin with the raw amino-acid sequence, 1013 residues long: Probable beta-galactosidase B (1013 aa).

The first 21 residues, 1 to 21, serve as a signal peptide directing secretion; that stretch reads MTRILNCLLVLLACLGVSSKA. Residue Y90 coordinates substrate. The N-linked (GlcNAc...) asparagine glycan is linked to N100. Substrate contacts are provided by N135, A136, E137, and N195. Residue E196 is the Proton donor of the active site. Residue N211 is glycosylated (N-linked (GlcNAc...) asparagine). A substrate-binding site is contributed by Y265. C271 and C324 are oxidised to a cystine. Residue E308 is the Nucleophile of the active site. Position 373 (Y373) interacts with substrate. 7 N-linked (GlcNAc...) asparagine glycosylation sites follow: N411, N442, N456, N626, N735, N768, and N775.

This sequence belongs to the glycosyl hydrolase 35 family.

It is found in the secreted. The catalysed reaction is Hydrolysis of terminal non-reducing beta-D-galactose residues in beta-D-galactosides.. In terms of biological role, cleaves beta-linked terminal galactosyl residues from gangliosides, glycoproteins, and glycosaminoglycans. This is Probable beta-galactosidase B (lacB) from Penicillium rubens (strain ATCC 28089 / DSM 1075 / NRRL 1951 / Wisconsin 54-1255) (Penicillium chrysogenum).